Here is a 557-residue protein sequence, read N- to C-terminus: Small ribosomal subunit protein bS1 (557 aa).

6 S1 motif domains span residues glycine 21–glutamate 87, serine 105–arginine 171, glycine 192–lysine 260, glycine 277–lysine 347, glycine 364–lysine 434, and glycine 451–arginine 520.

It belongs to the bacterial ribosomal protein bS1 family.

In terms of biological role, binds mRNA; thus facilitating recognition of the initiation point. It is needed to translate mRNA with a short Shine-Dalgarno (SD) purine-rich sequence. The chain is Small ribosomal subunit protein bS1 (rpsA) from Dickeya dadantii (strain 3937) (Erwinia chrysanthemi (strain 3937)).